The primary structure comprises 148 residues: Arginine repressor (148 aa).

This sequence belongs to the ArgR family.

The protein localises to the cytoplasm. It participates in amino-acid biosynthesis; L-arginine biosynthesis [regulation]. Regulates arginine biosynthesis genes. The polypeptide is Arginine repressor (argR) (Streptococcus pneumoniae serotype 4 (strain ATCC BAA-334 / TIGR4)).